We begin with the raw amino-acid sequence, 299 residues long: DNA-binding transcriptional repressor CapW (299 aa).

Positions 1–15 (MPDNFREGDKQDSQK) are enriched in basic and acidic residues. Positions 1-21 (MPDNFREGDKQDSQKGRQGAR) are disordered. The interval 1-95 (MPDNFREGDK…LFQPVYMTSS (95 aa)) is winged HTH domain. The interval 96–207 (LECYLNDLLQ…LSRIVQAQNA (112 aa)) is WYL domain. In terms of domain architecture, WYL spans 131–211 (LRRLDTDVVS…VQAQNAGPDE (81 aa)). Residues 156 to 200 (YQSMSDPQGSKRTLTPHSLVHDGYRWHTRAWCHKRGEYRDFLLSR) form a probable ligand-binding region region. The WCX domain stretch occupies residues 208–299 (GPDEERANGD…KDEIYALLKQ (92 aa)).

In terms of assembly, homodimer.

Transcriptional regulator of a CBASS antivirus system. CBASS (cyclic oligonucleotide-based antiphage signaling system) provides immunity against bacteriophage. The CD-NTase protein synthesizes cyclic nucleotides in response to infection; these serve as specific second messenger signals. The signals activate a diverse range of effectors, leading to bacterial cell death and thus abortive phage infection. A type III CBASS system. Expression of this CBASS system (Cap18-Cap6-Cap7-CdnC-CapW-Cap17) in a susceptible E.coli (strain MG1655) confers resistance to bacteriophage P1. Binds specifically to and represses expression from the CBASS promoter, found between the genes for divergently transcribed capW and cdnC. This Escherichia coli (strain KTE188) protein is DNA-binding transcriptional repressor CapW.